The sequence spans 385 residues: Lipid-A-disaccharide synthase (385 aa).

It belongs to the LpxB family.

It carries out the reaction 2-N,3-O-bis[(3R)-3-hydroxytetradecanoyl]-alpha-D-glucosaminyl 1-phosphate + UDP-2-N,3-O-bis[(3R)-3-hydroxytetradecanoyl]-alpha-D-glucosamine = lipid A disaccharide (E. coli) + UDP + H(+). The catalysed reaction is a lipid X + a UDP-2-N,3-O-bis[(3R)-3-hydroxyacyl]-alpha-D-glucosamine = a lipid A disaccharide + UDP + H(+). Its pathway is glycolipid biosynthesis; lipid IV(A) biosynthesis; lipid IV(A) from (3R)-3-hydroxytetradecanoyl-[acyl-carrier-protein] and UDP-N-acetyl-alpha-D-glucosamine: step 5/6. In terms of biological role, condensation of UDP-2,3-diacylglucosamine and 2,3-diacylglucosamine-1-phosphate to form lipid A disaccharide, a precursor of lipid A, a phosphorylated glycolipid that anchors the lipopolysaccharide to the outer membrane of the cell. The protein is Lipid-A-disaccharide synthase of Wigglesworthia glossinidia brevipalpis.